A 239-amino-acid polypeptide reads, in one-letter code: MATTWPPRTVIRKSSGLRTLESALQRSGLGPVAGVDEVGRGACAGPLVVAACALGPNRYESLAALDDSKKLTEKTREKLFPLICRYALAYHVVFIPSVEVDRRGVHVANIEGMRRAVAGLSVRPGYVLSDGFRVPGLSVPSLPVIGGDAAAACIAAASVLAKVSRDRLMVAMDTQYPGYGFAEHKGYSTRAHTLALTQLGPCPEHRRSFINVRRVATRSNGAAAAEREADPPQERDGTG.

The region spanning 30 to 221 (GPVAGVDEVG…VRRVATRSNG (192 aa)) is the RNase H type-2 domain. The a divalent metal cation site is built by Asp-36, Glu-37, and Asp-130. The disordered stretch occupies residues 219 to 239 (SNGAAAAEREADPPQERDGTG). Basic and acidic residues predominate over residues 225-239 (AEREADPPQERDGTG).

It belongs to the RNase HII family. Mn(2+) serves as cofactor. It depends on Mg(2+) as a cofactor.

It localises to the cytoplasm. The enzyme catalyses Endonucleolytic cleavage to 5'-phosphomonoester.. Its function is as follows. Endonuclease that specifically degrades the RNA of RNA-DNA hybrids. This chain is Ribonuclease HII, found in Mycobacterium marinum (strain ATCC BAA-535 / M).